The primary structure comprises 270 residues: NAD kinase (270 aa).

Catalysis depends on Asp62, which acts as the Proton acceptor. NAD(+) contacts are provided by residues 62–63 (DG), Arg67, 129–130 (ND), Lys140, Asp159, Ile167, 170–175 (TSYSFS), Ala194, and Gln227.

The protein belongs to the NAD kinase family. The cofactor is a divalent metal cation.

It localises to the cytoplasm. It catalyses the reaction NAD(+) + ATP = ADP + NADP(+) + H(+). Functionally, involved in the regulation of the intracellular balance of NAD and NADP, and is a key enzyme in the biosynthesis of NADP. Catalyzes specifically the phosphorylation on 2'-hydroxyl of the adenosine moiety of NAD to yield NADP. In Picrophilus torridus (strain ATCC 700027 / DSM 9790 / JCM 10055 / NBRC 100828 / KAW 2/3), this protein is NAD kinase.